We begin with the raw amino-acid sequence, 591 residues long: Probable sulfoacetaldehyde acetyltransferase (591 aa).

A disordered region spans residues 359 to 383 (MDHEDDDPGTEWNVGARQREPDRMS).

Belongs to the TPP enzyme family. Mg(2+) is required as a cofactor. Requires thiamine diphosphate as cofactor.

The protein localises to the cytoplasm. It carries out the reaction acetyl phosphate + sulfite + H(+) = sulfoacetaldehyde + phosphate. Its pathway is organosulfur degradation; taurine degradation via aerobic pathway; acetyl phosphate and sulfite from taurine: step 2/2. The polypeptide is Probable sulfoacetaldehyde acetyltransferase (xsc) (Rhizobium meliloti (strain 1021) (Ensifer meliloti)).